Consider the following 488-residue polypeptide: Replication-associated protein (488 aa).

Positions 462–488 are disordered; the sequence is PRPRQMQRSATEHNLFQYARSGRDPTS.

The protein resides in the host nucleus. In terms of biological role, plays an essential for the replication of viral DNA. Presumably cleaves viral genomic dsRNA replicative form to initiate rolling circle replication. The polypeptide is Replication-associated protein (Chaetoceros diatodnavirus 1 (Chaetoceros setoense DNA virus)).